The following is a 342-amino-acid chain: Glycerol-3-phosphate dehydrogenase [NAD(P)+] (342 aa).

3 residues coordinate NADPH: Trp11, Arg33, and Lys112. The sn-glycerol 3-phosphate site is built by Lys112, Gly147, and Ser149. Residue Ala151 coordinates NADPH. Sn-glycerol 3-phosphate-binding residues include Lys202, Asp255, Ser265, Arg266, and Asn267. Lys202 functions as the Proton acceptor in the catalytic mechanism. Arg266 provides a ligand contact to NADPH. Val290 and Glu292 together coordinate NADPH.

This sequence belongs to the NAD-dependent glycerol-3-phosphate dehydrogenase family.

Its subcellular location is the cytoplasm. It catalyses the reaction sn-glycerol 3-phosphate + NAD(+) = dihydroxyacetone phosphate + NADH + H(+). It carries out the reaction sn-glycerol 3-phosphate + NADP(+) = dihydroxyacetone phosphate + NADPH + H(+). It functions in the pathway membrane lipid metabolism; glycerophospholipid metabolism. Its function is as follows. Catalyzes the reduction of the glycolytic intermediate dihydroxyacetone phosphate (DHAP) to sn-glycerol 3-phosphate (G3P), the key precursor for phospholipid synthesis. The polypeptide is Glycerol-3-phosphate dehydrogenase [NAD(P)+] (Cupriavidus metallidurans (strain ATCC 43123 / DSM 2839 / NBRC 102507 / CH34) (Ralstonia metallidurans)).